The following is a 279-amino-acid chain: MDNTLNAFLRGIIEAATEFLPVSSTGHLFLFSYFFPFQNLSVPHEAFEDLFDIFIQTGAILSVVVLYYKTLWSHLVEAVRFGLGKSTDRSGFQFYLNLIVGILPILILGFLLKSQLDQIKMRSDLLLILGMSWFVGGIIMVFVEKRHLDESSGKTIGFKESIIVGFLQCFALIPGVSRSAATIISARTMGVSKKDSAEFSFFLAIPVLTLAGIYKLYKHRQILNSETIGLLLFGSIISFIICYFIIRLFMAFIRRRSFISFGVYRILLGLLVILYFVRY.

A run of 8 helical transmembrane segments spans residues T17–F37, A46–L66, F92–L112, S123–V143, I156–V176, A197–Y217, E226–I246, and S257–V277.

This sequence belongs to the UppP family.

The protein localises to the cell inner membrane. The enzyme catalyses di-trans,octa-cis-undecaprenyl diphosphate + H2O = di-trans,octa-cis-undecaprenyl phosphate + phosphate + H(+). Its function is as follows. Catalyzes the dephosphorylation of undecaprenyl diphosphate (UPP). Confers resistance to bacitracin. The polypeptide is Undecaprenyl-diphosphatase (Leptospira biflexa serovar Patoc (strain Patoc 1 / ATCC 23582 / Paris)).